The chain runs to 313 residues: Carbamate kinase 2 (313 aa).

It belongs to the carbamate kinase family.

It localises to the cytoplasm. The enzyme catalyses hydrogencarbonate + NH4(+) + ATP = carbamoyl phosphate + ADP + H2O + H(+). Its pathway is metabolic intermediate metabolism; carbamoyl phosphate degradation; CO(2) and NH(3) from carbamoyl phosphate: step 1/1. The polypeptide is Carbamate kinase 2 (arcC2) (Staphylococcus aureus (strain bovine RF122 / ET3-1)).